A 466-amino-acid polypeptide reads, in one-letter code: Glutamate--tRNA ligase (466 aa).

A 'HIGH' region motif is present at residues 9–19 (PSPTGDLHVGS). A 'KMSKS' region motif is present at residues 237-241 (KLSKR). Lys-240 is an ATP binding site.

This sequence belongs to the class-I aminoacyl-tRNA synthetase family. Glutamate--tRNA ligase type 1 subfamily. Monomer.

It is found in the cytoplasm. The enzyme catalyses tRNA(Glu) + L-glutamate + ATP = L-glutamyl-tRNA(Glu) + AMP + diphosphate. In terms of biological role, catalyzes the attachment of glutamate to tRNA(Glu) in a two-step reaction: glutamate is first activated by ATP to form Glu-AMP and then transferred to the acceptor end of tRNA(Glu). The polypeptide is Glutamate--tRNA ligase (Baumannia cicadellinicola subsp. Homalodisca coagulata).